We begin with the raw amino-acid sequence, 226 residues long: uncharacterized protein (226 aa).

In terms of domain architecture, HTH arsR-type spans 1-92 (MNPNIAKISS…QLLHIAPKAK (92 aa)). Residues 32 to 55 (AGELAYLANIKPQTASFHLNKLLE) constitute a DNA-binding region (H-T-H motif).

This is an uncharacterized protein from Bacillus subtilis (strain 168).